The primary structure comprises 568 residues: MASEWPETSRASSVEENPKLNIPEIVESVSDSKPSLKNQFSTTVIDSSDLNVFNDGAETTVKEQEFTSSELRRLQKLRLKMDLRIIPCLWILYFLSCCLRFTVSLSFTMNTAQGHSLIQTLSGYSAHYLALGLALFYVGYIIFEVPSNLMMAFIEPRIWVSRIQLTIGVVGACHAVLGTKHGNAQSYVALRFFLGVAESGLWPGLAYYMSRWYRGKHLGKRIGWYYTAAQIAAAAVSLVSAGFQKMDGARGLYGYQWMFLIWGVVAIAQALSIPWWLPAVASKEHRKSLSSFIPLPKWMKTLSPQRIGFLTPADKSLHSRYIAEMNVGKRWQWSDLLKSCLDLRVWPFILMYFGIVGVGNGIFNYCTLIIEEINPSFSGIDISLLNAPIWLADALGIVTVMPLYDRFHKKFSFFTGSCLIIIAGLAVANYAPRAWSRYGGLLMIGFGLGPTVPICMAWCSASMAKTYGDVGVASSLALVTGLGNLGSVVTTYALYSGWPGDPTFRKSNDVCIALIGVSIIACGIEFLLDKTGFGQFNASFNNHDHEVEDEQEMTDIKPALPSSQQADA.

12 consecutive transmembrane segments (helical) span residues 85–105 (IIPCLWILYFLSCCLRFTVSL), 123–143 (GYSAHYLALGLALFYVGYIIF), 158–178 (IWVSRIQLTIGVVGACHAVLG), 187–207 (YVALRFFLGVAESGLWPGLAY), 222–242 (IGWYYTAAQIAAAAVSLVSAG), 257–277 (WMFLIWGVVAIAQALSIPWWL), 345–365 (VWPFILMYFGIVGVGNGIFNY), 384–404 (LLNAPIWLADALGIVTVMPLY), 411–431 (FSFFTGSCLIIIAGLAVANYA), 439–459 (GGLLMIGFGLGPTVPICMAWC), 470–490 (VGVASSLALVTGLGNLGSVVT), and 508–528 (NDVCIALIGVSIIACGIEFLL). A disordered region spans residues 547 to 568 (VEDEQEMTDIKPALPSSQQADA).

This sequence belongs to the major facilitator superfamily. Allantoate permease family.

The protein resides in the membrane. Its function is as follows. Involved in uptake of biotin and desthiobiotin with the concomitant entry of protons. This chain is Vitamin H transporter 1 (vht1), found in Schizosaccharomyces pombe (strain 972 / ATCC 24843) (Fission yeast).